The sequence spans 586 residues: Arginine--tRNA ligase (586 aa).

A 'HIGH' region motif is present at residues 131-141 (ANPTGPMHVGH).

This sequence belongs to the class-I aminoacyl-tRNA synthetase family. As to quaternary structure, monomer.

The protein resides in the cytoplasm. The catalysed reaction is tRNA(Arg) + L-arginine + ATP = L-arginyl-tRNA(Arg) + AMP + diphosphate. The sequence is that of Arginine--tRNA ligase from Xanthobacter autotrophicus (strain ATCC BAA-1158 / Py2).